The primary structure comprises 728 residues: LPS-assembly protein LptD (728 aa).

The N-terminal stretch at 1-21 is a signal peptide; it reads MSALPGFTLAALLLNVSLAEA.

It belongs to the LptD family. As to quaternary structure, component of the lipopolysaccharide transport and assembly complex. Interacts with LptE and LptA.

It localises to the cell outer membrane. In terms of biological role, together with LptE, is involved in the assembly of lipopolysaccharide (LPS) at the surface of the outer membrane. This Thiobacillus denitrificans (strain ATCC 25259 / T1) protein is LPS-assembly protein LptD.